A 335-amino-acid chain; its full sequence is Probable cytosolic iron-sulfur protein assembly protein Ciao1 (335 aa).

WD repeat units follow at residues 12–51 (GHKGRIWGVAWHPKGNVFASCGEDKAIRIWSLTGNTWSTK), 57–96 (GHKRTIREIRWSPCGQYLASASFDATTAIWSKSSGEFECN), 101–140 (GHENEVKSVSWSRSGGLLATCSRDKSVWIWEVAGDDEFEC), 146–185 (PHTQDVKRVVWHPTKDVLASASYDNTIKMFAEEPIDNDWD), 192–231 (SHTSTVWGIDFDADGERLVSCSDDTTIKIWKAYHPGNTAG), 250–289 (QHSRAIYDVSWCKLTGLIATACGDDGIRIFKETSDSKPDE), and 301–335 (AHDQDVNSVQWNPVVAGQLISCSDDGTIKIWKVSE).

It belongs to the WD repeat CIA1 family.

Essential component of the cytosolic iron-sulfur (Fe/S) protein assembly machinery. Required for the maturation of extramitochondrial Fe/S proteins. The sequence is that of Probable cytosolic iron-sulfur protein assembly protein Ciao1 from Drosophila simulans (Fruit fly).